The following is a 261-amino-acid chain: Protein-ADP-ribose hydrolase (261 aa).

The region spanning 74–261 is the Macro domain; it reads ADLKPVTGRG…DEALYNKLMS (188 aa). The ADP-D-ribose site is built by Asp93, Ile94, and Asn107. Zn(2+)-binding residues include Cys113, His118, and Cys120. Cys120, Ile121, Asp122, Ser211, Thr212, Gly213, and Phe215 together coordinate ADP-D-ribose.

It belongs to the MacroD-type family. Zn-Macro subfamily. Requires Zn(2+) as cofactor.

It catalyses the reaction 4-O-(ADP-D-ribosyl)-L-aspartyl-[protein] + H2O = L-aspartyl-[protein] + ADP-D-ribose + H(+). ADP-ribosylhydrolase that specifically reverses the SirTM-mediated mono-ADP-ribosylation at an asparatate residue of GcvH-L, by releasing ADP-ribose from the target protein. May play a role in the regulation of the response to host-induced oxidative stress. In Treponema medium, this protein is Protein-ADP-ribose hydrolase.